The sequence spans 248 residues: Putative homeobox-leucine zipper protein HOX26 (248 aa).

The tract at residues 50–118 (KKVAAAAVVA…GDEEGASRKK (69 aa)) is disordered. A compositionally biased stretch (basic residues) spans 79–89 (RQRRSCKKGRR). A DNA-binding region (homeobox) is located at residues 114–173 (ASRKKLRLTGEQATLLEDSFRAHNILSHAEKQELAGKLGLSARQVEVWFQNRRARTKLKQ). Residues 172–216 (KQTEADCDLLRRWCDHLAADNARLRRDLAELRRSSSSPPVSGLAV) are leucine-zipper.

This sequence belongs to the HD-ZIP homeobox family. Class II subfamily.

The protein localises to the nucleus. Probable transcription factor. This is Putative homeobox-leucine zipper protein HOX26 (HOX26) from Oryza sativa subsp. japonica (Rice).